Consider the following 689-residue polypeptide: Potassium-transporting ATPase ATP-binding subunit (689 aa).

4 helical membrane passes run 35–55 (VMFV…AILA), 62–82 (AAFT…ANFA), 220–240 (ALTI…ATLF), and 260–280 (VLVA…LSAI). Residue Asp313 is the 4-aspartylphosphate intermediate of the active site. ATP contacts are provided by residues Asp350, Glu354, 383–390 (FSAQTRMS), and Lys401. Mg(2+) contacts are provided by Asp524 and Asp528. Transmembrane regions (helical) follow at residues 594 to 614 (FAII…LNVM), 622 to 642 (AIMS…PLAL), and 665 to 685 (VGGL…LVAL).

The protein belongs to the cation transport ATPase (P-type) (TC 3.A.3) family. Type IA subfamily. In terms of assembly, the system is composed of three essential subunits: KdpA, KdpB and KdpC.

The protein resides in the cell inner membrane. The catalysed reaction is K(+)(out) + ATP + H2O = K(+)(in) + ADP + phosphate + H(+). In terms of biological role, part of the high-affinity ATP-driven potassium transport (or Kdp) system, which catalyzes the hydrolysis of ATP coupled with the electrogenic transport of potassium into the cytoplasm. This subunit is responsible for energy coupling to the transport system and for the release of the potassium ions to the cytoplasm. The chain is Potassium-transporting ATPase ATP-binding subunit from Serratia proteamaculans (strain 568).